Consider the following 363-residue polypeptide: 24-methylenesterol C-methyltransferase 2 (363 aa).

A helical membrane pass occupies residues methionine 6–glycine 26.

The protein belongs to the class I-like SAM-binding methyltransferase superfamily. Erg6/SMT family.

It is found in the membrane. The catalysed reaction is 24-methylidenelophenol + S-adenosyl-L-methionine = (Z)-24-ethylidenelophenol + S-adenosyl-L-homocysteine + H(+). The protein operates within steroid biosynthesis; sterol biosynthesis. In terms of biological role, catalyzes the methyl transfer from S-adenosyl-methionine to the methylene group of 24-methylene lophenol to form 24-ethylidene lophenol. This chain is 24-methylenesterol C-methyltransferase 2 (Smt2-1), found in Oryza sativa subsp. japonica (Rice).